The sequence spans 223 residues: Urease accessory protein UreF (223 aa).

It belongs to the UreF family. In terms of assembly, ureD, UreF and UreG form a complex that acts as a GTP-hydrolysis-dependent molecular chaperone, activating the urease apoprotein by helping to assemble the nickel containing metallocenter of UreC. The UreE protein probably delivers the nickel.

The protein resides in the cytoplasm. Required for maturation of urease via the functional incorporation of the urease nickel metallocenter. The chain is Urease accessory protein UreF from Pseudomonas aeruginosa (strain LESB58).